A 321-amino-acid polypeptide reads, in one-letter code: Probable membrane-associated kinase regulator 3 (321 aa).

Over residues 297–314 (KSNVTESELCSSRTSVST) the composition is skewed to polar residues. A disordered region spans residues 297 to 321 (KSNVTESELCSSRTSVSTCGDLDKD).

The protein localises to the cell membrane. This Arabidopsis thaliana (Mouse-ear cress) protein is Probable membrane-associated kinase regulator 3 (MAKR3).